The chain runs to 368 residues: Phosphoserine aminotransferase (368 aa).

Arg44 contacts L-glutamate. Residues 78 to 79 (AT), Trp104, Thr157, Asp179, and Gln202 contribute to the pyridoxal 5'-phosphate site. Lys203 carries the N6-(pyridoxal phosphate)lysine modification. 244–245 (NT) lines the pyridoxal 5'-phosphate pocket.

Belongs to the class-V pyridoxal-phosphate-dependent aminotransferase family. SerC subfamily. In terms of assembly, homodimer. Pyridoxal 5'-phosphate is required as a cofactor.

The protein resides in the cytoplasm. The catalysed reaction is O-phospho-L-serine + 2-oxoglutarate = 3-phosphooxypyruvate + L-glutamate. The enzyme catalyses 4-(phosphooxy)-L-threonine + 2-oxoglutarate = (R)-3-hydroxy-2-oxo-4-phosphooxybutanoate + L-glutamate. It functions in the pathway amino-acid biosynthesis; L-serine biosynthesis; L-serine from 3-phospho-D-glycerate: step 2/3. The protein operates within cofactor biosynthesis; pyridoxine 5'-phosphate biosynthesis; pyridoxine 5'-phosphate from D-erythrose 4-phosphate: step 3/5. Catalyzes the reversible conversion of 3-phosphohydroxypyruvate to phosphoserine and of 3-hydroxy-2-oxo-4-phosphonooxybutanoate to phosphohydroxythreonine. The polypeptide is Phosphoserine aminotransferase (Neisseria meningitidis serogroup C / serotype 2a (strain ATCC 700532 / DSM 15464 / FAM18)).